The primary structure comprises 253 residues: Tryptophan synthase alpha chain (253 aa).

Active-site proton acceptor residues include E48 and D59.

This sequence belongs to the TrpA family. Tetramer of two alpha and two beta chains.

The enzyme catalyses (1S,2R)-1-C-(indol-3-yl)glycerol 3-phosphate + L-serine = D-glyceraldehyde 3-phosphate + L-tryptophan + H2O. It functions in the pathway amino-acid biosynthesis; L-tryptophan biosynthesis; L-tryptophan from chorismate: step 5/5. Functionally, the alpha subunit is responsible for the aldol cleavage of indoleglycerol phosphate to indole and glyceraldehyde 3-phosphate. The protein is Tryptophan synthase alpha chain of Caldicellulosiruptor saccharolyticus (strain ATCC 43494 / DSM 8903 / Tp8T 6331).